Consider the following 534-residue polypeptide: Cytochrome P450 monooxygenase AN1598 (534 aa).

N-linked (GlcNAc...) asparagine glycosylation is present at asparagine 3. Residues 25-45 (LYLEILGVLSVVYLLQTLVAY) traverse the membrane as a helical segment. Asparagine 95 carries an N-linked (GlcNAc...) asparagine glycan. Cysteine 464 provides a ligand contact to heme. Asparagine 498 is a glycosylation site (N-linked (GlcNAc...) asparagine).

It belongs to the cytochrome P450 family. Requires heme as cofactor.

The protein localises to the membrane. Its pathway is secondary metabolite biosynthesis; terpenoid biosynthesis. In terms of biological role, bifunctional terpene synthase; part of the gene cluster that mediates the biosynthesis of the diterpene ent-pimara-8(14),15-diene (PD). Within the cluster, the HMG-CoA reductase AN1593 functions in the mevalonate pathway, which produces isoprenoid precursors. The geranylgeranyl pyrophosphate (GGPP) synthase AN1592 is needed in the formation of GGPP, the precursor for diterpenes. Lastly, the pimaradiene synthase pbcA performs the 2 cyclization steps that convert GGPP to ent-pimara-8(14),15-diene. The putative roles of the remaining cluster enzymes in ent-pimara-8(14),15-diene biosynthesis is unclear. The cytochrome P450 monooxygenase AN1598, the glutathione S-transferase AN1595, the oxidoreductases AN1596 and AN1597 probably function as decorative enzymes. It is possible that in biological conditions the compound is oxidized to ent-pimara-8(14),15-dien-19-oic acid, which is a bioactive diterpene compound predominant in many plant extracts. The polypeptide is Cytochrome P450 monooxygenase AN1598 (Emericella nidulans (strain FGSC A4 / ATCC 38163 / CBS 112.46 / NRRL 194 / M139) (Aspergillus nidulans)).